The chain runs to 48 residues: uncharacterized protein (48 aa).

The protein resides in the mitochondrion. This is an uncharacterized protein from Emericella nidulans (Aspergillus nidulans).